A 364-amino-acid chain; its full sequence is MGRPLLLIAAGGTGGHMFPAQALAEAMVRRGWRVKLSTDARGARYAGGFPHVVEIEEVSSATFARGGPLAKALVPLRIAGGVASAVAGFLRDRPSVVVGFGGYPSIPALSAAVALRLPRMIHEQNGVLGRVNRLFAPRVQAVCCGTWPTDLPEGVEGYYTGNPVRAAVLERAAAPYIVPGDYPMSLVVIGGSQGARVLSDVVPEAIARLPEQILANLRIAHQAREEDVARVTEAYDRAGLLAEVKTFFTDIPRRLSEAQLVISRSGASSVADISIIGRPAILVPFAAATADHQTANARGLVEAEAAILIPESALDPAALSEHIAAVLSQPDAARQMARNALAHGRPDATERLVEVVEHLARKET.

UDP-N-acetyl-alpha-D-glucosamine-binding positions include 13 to 15, Asn-125, Arg-165, Ser-192, and Gln-293; that span reads TGG.

The protein belongs to the glycosyltransferase 28 family. MurG subfamily.

It localises to the cell inner membrane. The enzyme catalyses di-trans,octa-cis-undecaprenyl diphospho-N-acetyl-alpha-D-muramoyl-L-alanyl-D-glutamyl-meso-2,6-diaminopimeloyl-D-alanyl-D-alanine + UDP-N-acetyl-alpha-D-glucosamine = di-trans,octa-cis-undecaprenyl diphospho-[N-acetyl-alpha-D-glucosaminyl-(1-&gt;4)]-N-acetyl-alpha-D-muramoyl-L-alanyl-D-glutamyl-meso-2,6-diaminopimeloyl-D-alanyl-D-alanine + UDP + H(+). It participates in cell wall biogenesis; peptidoglycan biosynthesis. Its function is as follows. Cell wall formation. Catalyzes the transfer of a GlcNAc subunit on undecaprenyl-pyrophosphoryl-MurNAc-pentapeptide (lipid intermediate I) to form undecaprenyl-pyrophosphoryl-MurNAc-(pentapeptide)GlcNAc (lipid intermediate II). The sequence is that of UDP-N-acetylglucosamine--N-acetylmuramyl-(pentapeptide) pyrophosphoryl-undecaprenol N-acetylglucosamine transferase from Cereibacter sphaeroides (strain ATCC 17029 / ATH 2.4.9) (Rhodobacter sphaeroides).